The following is a 244-amino-acid chain: Diablo homolog, mitochondrial (244 aa).

A mitochondrion-targeting transit peptide spans 1 to 38; it reads MASLPRRLIWSFSYILRESFPIVSRRNCVSLLRASWRK. The short motif at 50 to 54 is the IAP-binding element; it reads AIPVG. Basic and acidic residues predominate over residues 207-218; the sequence is DEIKRTITEDKG. A disordered region spans residues 207-244; the sequence is DEIKRTITEDKGNPPSGGSPRSSLSEEEEIPEAYLRED. The span at 220–229 shows a compositional bias: low complexity; sequence PPSGGSPRSS.

This sequence belongs to the Smac/DIABLO protein family. In terms of assembly, homodimer.

Its subcellular location is the mitochondrion. Promotes apoptosis. Acts by opposing the inhibitory activity of inhibitor of apoptosis proteins (IAP). The protein is Diablo homolog, mitochondrial of Xenopus tropicalis (Western clawed frog).